The following is a 627-amino-acid chain: Threonine--tRNA ligase (627 aa).

Residues 1 to 147 (MRMLLIHSDY…TIVPSGEAKA (147 aa)) form an editing domain region. The interval 208–507 (PHVRIMLEQE…QSKGIKPMFP (300 aa)) is catalytic. Positions 300, 352, and 476 each coordinate Zn(2+).

It belongs to the class-II aminoacyl-tRNA synthetase family. Homodimer. Zn(2+) is required as a cofactor.

It is found in the cytoplasm. The catalysed reaction is tRNA(Thr) + L-threonine + ATP = L-threonyl-tRNA(Thr) + AMP + diphosphate + H(+). Functionally, catalyzes the attachment of threonine to tRNA(Thr) in a two-step reaction: L-threonine is first activated by ATP to form Thr-AMP and then transferred to the acceptor end of tRNA(Thr). Also edits incorrectly charged L-seryl-tRNA(Thr). The polypeptide is Threonine--tRNA ligase (Thermococcus onnurineus (strain NA1)).